A 264-amino-acid polypeptide reads, in one-letter code: Triosephosphate isomerase (264 aa).

A substrate-binding site is contributed by 13–15 (NWK). Histidine 106 functions as the Electrophile in the catalytic mechanism. Residue glutamate 179 is the Proton acceptor of the active site. Substrate contacts are provided by residues glycine 185, serine 223, and 244–245 (GG).

The protein belongs to the triosephosphate isomerase family. As to quaternary structure, homodimer.

The protein resides in the cytoplasm. The enzyme catalyses D-glyceraldehyde 3-phosphate = dihydroxyacetone phosphate. The protein operates within carbohydrate biosynthesis; gluconeogenesis. Its pathway is carbohydrate degradation; glycolysis; D-glyceraldehyde 3-phosphate from glycerone phosphate: step 1/1. Its function is as follows. Involved in the gluconeogenesis. Catalyzes stereospecifically the conversion of dihydroxyacetone phosphate (DHAP) to D-glyceraldehyde-3-phosphate (G3P). This Acinetobacter baumannii (strain AB0057) protein is Triosephosphate isomerase.